A 176-amino-acid polypeptide reads, in one-letter code: MARFLLATQATPTISATDANPRTLGDSVSNNKNIASMDTHMVIILAALLCALICALGINSVLRCVLRCTRRFTPNEDPVDTNANVAKGIKKRALKVIPVDSYSPELKMKATECLICLGDFVEGETVRVLPKCNHGFHVKCIDTWLLSHSSCPTCRQSLLEHQTPANGSRRGDDVAT.

A signal peptide spans 1–16 (MARFLLATQATPTISA). A helical transmembrane segment spans residues 42–62 (VIILAALLCALICALGINSVL). An RING-type; atypical zinc finger spans residues 113-155 (CLICLGDFVEGETVRVLPKCNHGFHVKCIDTWLLSHSSCPTCR).

Belongs to the RING-type zinc finger family. ATL subfamily.

Its subcellular location is the membrane. It carries out the reaction S-ubiquitinyl-[E2 ubiquitin-conjugating enzyme]-L-cysteine + [acceptor protein]-L-lysine = [E2 ubiquitin-conjugating enzyme]-L-cysteine + N(6)-ubiquitinyl-[acceptor protein]-L-lysine.. The protein operates within protein modification; protein ubiquitination. The chain is RING-H2 finger protein ATL73 (ATL73) from Arabidopsis thaliana (Mouse-ear cress).